The sequence spans 135 residues: Histone H3.3C (135 aa).

Positions M1–Y41 are disordered. R3 carries the asymmetric dimethylarginine; by PRMT6; alternate modification. R3 bears the Citrulline; alternate mark. A Phosphothreonine; by HASPIN modification is found at T4. Position 5 is an allysine; alternate (K5). An N6,N6,N6-trimethyllysine; alternate modification is found at K5. N6,N6-dimethyllysine; alternate is present on K5. N6-(2-hydroxyisobutyryl)lysine; alternate is present on K5. Position 5 is an N6-(beta-hydroxybutyryl)lysine; alternate (K5). K5 carries the N6-acetyllysine; alternate modification. K5 bears the N6-methyllysine; alternate mark. Q6 carries the 5-glutamyl dopamine; alternate modification. Q6 is subject to 5-glutamyl serotonin; alternate. Position 7 is a phosphothreonine; by PKC (T7). The residue at position 9 (R9) is a Citrulline; alternate. At R9 the chain carries Symmetric dimethylarginine; by PRMT5; alternate. N6,N6,N6-trimethyllysine; alternate is present on K10. N6,N6-dimethyllysine; alternate is present on K10. At K10 the chain carries N6-(2-hydroxyisobutyryl)lysine; alternate. Residue K10 is modified to N6-(beta-hydroxybutyryl)lysine; alternate. The residue at position 10 (K10) is an N6-acetyllysine; alternate. At K10 the chain carries N6-methyllysine; alternate. At K10 the chain carries N6-lactoyllysine; alternate. S11 is modified (ADP-ribosylserine; alternate). Position 11 is a phosphoserine; alternate; by AURKB, AURKC, RPS6KA3, RPS6KA4 and RPS6KA5 (S11). T12 is modified (phosphothreonine; by PKC). N6-(2-hydroxyisobutyryl)lysine; alternate is present on K15. The residue at position 15 (K15) is an N6-(beta-hydroxybutyryl)lysine; alternate. K15 carries the N6-acetyllysine; alternate modification. K15 carries the post-translational modification N6-lactoyllysine; alternate. K15 is modified (N6-glutaryllysine; alternate). K15 carries the post-translational modification N6-succinyllysine; alternate. Residue R18 is modified to Citrulline; alternate. The residue at position 18 (R18) is an Asymmetric dimethylarginine; by CARM1; alternate. N6-(2-hydroxyisobutyryl)lysine; alternate occurs at positions 19 and 24. K19 and K24 each carry N6-(beta-hydroxybutyryl)lysine; alternate. Residues K19 and K24 each carry the N6-acetyllysine; alternate modification. N6-methyllysine; alternate is present on residues K19 and K24. K19 and K24 each carry N6-lactoyllysine; alternate. 2 positions are modified to N6-glutaryllysine; alternate: K19 and K24. 2 positions are modified to N6-butyryllysine; alternate: K19 and K24. R27 bears the Citrulline mark. An N6,N6,N6-trimethyllysine; alternate modification is found at K28. K28 carries the N6,N6-dimethyllysine; alternate modification. K28 carries the post-translational modification N6-(2-hydroxyisobutyryl)lysine; alternate. K28 is modified (N6-acetyllysine; alternate). K28 is modified (N6-methyllysine; alternate). K28 bears the N6-lactoyllysine; alternate mark. At K28 the chain carries N6-glutaryllysine; alternate. At S29 the chain carries ADP-ribosylserine; alternate. S29 carries the phosphoserine; alternate; by AURKB, AURKC and RPS6KA5 modification. S32 bears the Phosphoserine mark. Residue K37 is modified to N6-methyllysine. Y41 is subject to Phosphotyrosine. At K56 the chain carries N6,N6,N6-trimethyllysine; alternate. K56 carries the post-translational modification N6-(2-hydroxyisobutyryl)lysine; alternate. K56 is subject to N6-(beta-hydroxybutyryl)lysine; alternate. K56 carries the post-translational modification N6-acetyllysine; alternate. K56 is modified (N6-lactoyllysine; alternate). At K56 the chain carries N6-glutaryllysine; alternate. An N6-succinyllysine; alternate modification is found at K56. N6-methyllysine; by EHMT2; alternate is present on K56. S57 carries the phosphoserine modification. Position 64 is an N6-(2-hydroxyisobutyryl)lysine; alternate (K64). Residue K64 is modified to N6-methyllysine; alternate. T80 is subject to Phosphothreonine. Residue S86 is modified to Phosphoserine. T107 carries the post-translational modification Phosphothreonine. Residues K115 and K122 each carry the N6-glutaryllysine; alternate modification. K115 is subject to N6-acetyllysine. K122 carries the N6-(2-hydroxyisobutyryl)lysine; alternate modification. Position 122 is an N6-acetyllysine; alternate (K122). K122 is modified (N6-methyllysine; alternate). K122 carries the N6-succinyllysine; alternate modification.

This sequence belongs to the histone H3 family. As to quaternary structure, the nucleosome is a histone octamer containing two molecules each of H2A, H2B, H3 and H4 assembled in one H3-H4 heterotetramer and two H2A-H2B heterodimers. The octamer wraps approximately 147 bp of DNA. Post-translationally, acetylation is generally linked to gene activation. Acetylation on Lys-10 (H3K9ac) impairs methylation at Arg-9 (H3R8me2s). Acetylation on Lys-19 (H3K18ac) and Lys-24 (H3K24ac) favors methylation at Arg-18 (H3R17me). Acetylation at Lys-122 (H3K122ac) by EP300/p300 plays a central role in chromatin structure: localizes at the surface of the histone octamer and stimulates transcription, possibly by promoting nucleosome instability. Citrullination at Arg-9 (H3R8ci) and/or Arg-18 (H3R17ci) by PADI4 impairs methylation and represses transcription. In terms of processing, asymmetric dimethylation at Arg-18 (H3R17me2a) by CARM1 is linked to gene activation. Symmetric dimethylation at Arg-9 (H3R8me2s) by PRMT5 is linked to gene repression. Asymmetric dimethylation at Arg-3 (H3R2me2a) by PRMT6 is linked to gene repression and is mutually exclusive with H3 Lys-5 methylation (H3K4me2 and H3K4me3). H3R2me2a is present at the 3' of genes regardless of their transcription state and is enriched on inactive promoters, while it is absent on active promoters. Post-translationally, methylation at Lys-5 (H3K4me) is linked to gene activation. Methylation at Lys-5 (H3K4me) facilitates subsequent acetylation of H3 and H4. Methylation at Lys-10 (H3K9me) and Lys-28 (H3K27me) are linked to gene repression. Methylation at Lys-10 (H3K9me) is a specific target for HP1 proteins (CBX1, CBX3 and CBX5) and prevents subsequent phosphorylation at Ser-11 (H3S10ph) and acetylation of H3 and H4. Methylation at Lys-5 (H3K4me) requires preliminary monoubiquitination of H2B at 'Lys-120'. Methylation at Lys-10 (H3K9me) and Lys-28 (H3K27me) are enriched in inactive X chromosome chromatin. Monomethylation at Lys-56 (H3K56me1) by EHMT2/G9A in G1 phase promotes interaction with PCNA and is required for DNA replication. Phosphorylated at Thr-4 (H3T3ph) by HASPIN during prophase and dephosphorylated during anaphase. Phosphorylation at Ser-11 (H3S10ph) by AURKB is crucial for chromosome condensation and cell-cycle progression during mitosis and meiosis. In addition phosphorylation at Ser-11 (H3S10ph) by RPS6KA4 and RPS6KA5 is important during interphase because it enables the transcription of genes following external stimulation, like mitogens, stress, growth factors or UV irradiation and result in the activation of genes, such as c-fos and c-jun. Phosphorylation at Ser-11 (H3S10ph), which is linked to gene activation, prevents methylation at Lys-10 (H3K9me) but facilitates acetylation of H3 and H4. Phosphorylation at Ser-11 (H3S10ph) by AURKB mediates the dissociation of HP1 proteins (CBX1, CBX3 and CBX5) from heterochromatin. Phosphorylation at Ser-11 (H3S10ph) is also an essential regulatory mechanism for neoplastic cell transformation. Phosphorylated at Ser-29 (H3S28ph) by MAP3K20 isoform 1, RPS6KA5 or AURKB during mitosis or upon ultraviolet B irradiation. Phosphorylation at Thr-7 (H3T6ph) by PRKCB is a specific tag for epigenetic transcriptional activation that prevents demethylation of Lys-5 (H3K4me) by LSD1/KDM1A. At centromeres, specifically phosphorylated at Thr-12 (H3T11ph) from prophase to early anaphase, by DAPK3 and PKN1. Phosphorylation at Thr-12 (H3T11ph) by PKN1 or isoform M2 of PKM (PKM2) is a specific tag for epigenetic transcriptional activation that promotes demethylation of Lys-10 (H3K9me) by KDM4C/JMJD2C. Phosphorylation at Tyr-41 (H3Y41ph) by JAK2 promotes exclusion of CBX5 (HP1 alpha) from chromatin. In terms of processing, lysine deamination at Lys-5 (H3K4all) to form allysine is mediated by LOXL2. Allysine formation by LOXL2 only takes place on H3K4me3 and results in gene repression. Post-translationally, butyrylation of histones marks active promoters and competes with histone acetylation. It is present during late spermatogenesis. Succinylated. Desuccinylation at Lys-122 (H3K122succ) by SIRT7 in response to DNA damage promotes chromatin condensation and double-strand breaks (DSBs) repair. In terms of processing, serine ADP-ribosylation constitutes the primary form of ADP-ribosylation of proteins in response to DNA damage. Serine ADP-ribosylation at Ser-11 (H3S10ADPr) is mutually exclusive with phosphorylation at Ser-11 (H3S10ph) and impairs acetylation at Lys-10 (H3K9ac). In terms of tissue distribution, specifically expressed in the seminiferous tubules of testis.

The protein resides in the nucleus. It localises to the chromosome. Core component of nucleosome. Nucleosomes wrap and compact DNA into chromatin, limiting DNA accessibility to the cellular machineries which require DNA as a template. Histones thereby play a central role in transcription regulation, DNA repair, DNA replication and chromosomal stability. DNA accessibility is regulated via a complex set of post-translational modifications of histones, also called histone code, and nucleosome remodeling. Hominid-specific H3.5/H3F3C preferentially colocalizes with euchromatin, and it is associated with actively transcribed genes. The sequence is that of Histone H3.3C from Homo sapiens (Human).